Here is a 370-residue protein sequence, read N- to C-terminus: Protein PELPK1 (370 aa).

The signal sequence occupies residues 1–34 (MALMKKSLSAALLSSPLLIICLIALLADPFSVGA). 52 tandem repeats follow at residues 43-47 (PEIPK), 49-53 (PELPK), 54-58 (FEVPK), 60-64 (PEFPK), 65-69 (PELPK), 71-75 (PEFPK), 76-80 (PELPK), 82-86 (PEIPK), 87-91 (PELPK), 93-97 (PEIPK), 98-102 (PEETK), 104-108 (PDIPK), 109-113 (LELPK), 115-119 (PEIPK), 120-124 (PELPK), 126-130 (PEIPK), 131-135 (PELPK), 137-141 (PEIQK), 142-146 (PELPK), 148-152 (PEIPK), 153-157 (PELPK), 159-163 (PEIPK), 164-168 (PDLPK), 175-179 (PEVPK), 186-190 (PEAPK), 192-196 (PEIPK), 197-201 (PELPK), 203-207 (PEVPK), 214-218 (PEIQK), 219-223 (PELPK), 225-229 (PELPK), 231-235 (PEIQK), 236-240 (PELPK), 242-246 (PEVPK), 247-251 (LEAPK), 253-257 (PEIQK), 258-262 (PELPK), 264-268 (PELPK), 270-274 (PEIQK), 275-279 (PELPK), 281-285 (PEIQK), 286-290 (PELPK), 292-296 (PEVPK), 303-307 (PEVPK), 314-318 (PEIPK), 319-323 (PELPK), 325-329 (PEVPK), 330-334 (PELPK), 336-340 (PEITK), 344-348 (PEIPK), 355-359 (PQLPK), and 361-365 (PEFPK). The 52 X 5 AA tandem repeat of P-[DEGQ]-[AEFLIV]-[QPT]-K stretch occupies residues 43 to 365 (PEIPKLPELP…QLPKLPEFPK (323 aa)). A compositionally biased stretch (basic and acidic residues) spans 65–223 (PELPKLPEFP…PEIQKPELPK (159 aa)). Positions 65–370 (PELPKLPEFP…PEFPKVPGTP (306 aa)) are disordered. Positions 232–262 (EIQKPELPKLPEVPKLEAPKVPEIQKPELPK) are enriched in basic and acidic residues. Composition is skewed to basic and acidic residues over residues 271-296 (EIQKPELPKMPEIQKPELPKVPEVPK) and 306-334 (PKSEAPKFPEIPKPELPKIPEVPKPELPK).

It is found in the secreted. Its subcellular location is the cell wall. Positive regulator of germination and plant growth. This chain is Protein PELPK1, found in Arabidopsis thaliana (Mouse-ear cress).